A 128-amino-acid chain; its full sequence is Holin-like protein CidA (128 aa).

4 helical membrane passes run 4 to 24, 26 to 46, 59 to 79, and 88 to 108; these read LLLT…INWV, ALLH…FTLL, GAAW…VGVI, and FGVS…VSTG.

This sequence belongs to the CidA/LrgA family. CidA subfamily.

The protein resides in the cell membrane. Functionally, increases the activity of extracellular murein hydrolases possibly by mediating their export via hole formation. Inhibited by the antiholin-like proteins LrgAB. In an unstressed cell, the LrgAB products probably inhibit the function of the CidA protein. When a cell is stressed by the addition of antibiotics or by other factors in the environment, CidA possibly oligomerizes within the bacterial cell membrane, creating lesions that disrupt the proton motive force, which in turn results in loss of cell viability. These lesions are also hypothesized to regulate the subsequent cell lysis by either allowing the murein hydrolases access to the cell wall substrate and/or regulating their activity by a possible change in the cell wall pH that results from loss of membrane potential. The sequence is that of Holin-like protein CidA from Bacillus subtilis (strain 168).